We begin with the raw amino-acid sequence, 610 residues long: Elongation factor 4 (610 aa).

One can recognise a tr-type G domain in the interval 11-193 (EKIRNFSIIA…QIVEKVPAPT (183 aa)). GTP is bound by residues 23–28 (DHGKST) and 140–143 (NKID).

The protein belongs to the TRAFAC class translation factor GTPase superfamily. Classic translation factor GTPase family. LepA subfamily.

The protein localises to the cell membrane. The catalysed reaction is GTP + H2O = GDP + phosphate + H(+). In terms of biological role, required for accurate and efficient protein synthesis under certain stress conditions. May act as a fidelity factor of the translation reaction, by catalyzing a one-codon backward translocation of tRNAs on improperly translocated ribosomes. Back-translocation proceeds from a post-translocation (POST) complex to a pre-translocation (PRE) complex, thus giving elongation factor G a second chance to translocate the tRNAs correctly. Binds to ribosomes in a GTP-dependent manner. In Streptococcus pyogenes serotype M12 (strain MGAS9429), this protein is Elongation factor 4.